Reading from the N-terminus, the 309-residue chain is Protein FdhE (309 aa).

It belongs to the FdhE family.

It localises to the cytoplasm. In terms of biological role, necessary for formate dehydrogenase activity. This Shigella boydii serotype 18 (strain CDC 3083-94 / BS512) protein is Protein FdhE.